Here is a 306-residue protein sequence, read N- to C-terminus: uncharacterized protein (306 aa).

The Proton acceptor role is filled by aspartate 204.

Belongs to the aminoglycoside phosphotransferase family.

This is an uncharacterized protein from Bacillus subtilis (strain 168).